Reading from the N-terminus, the 475-residue chain is Fez family zinc finger protein 1 (475 aa).

An Engrailed homology 1 repressor motif is present at residues proline 28–proline 43. C2H2-type zinc fingers lie at residues phenylalanine 260–histidine 282, phenylalanine 288–histidine 310, histidine 316–histidine 338, phenylalanine 344–histidine 366, phenylalanine 372–histidine 394, and phenylalanine 400–histidine 423. Residues serine 425–glutamine 475 are disordered. The segment covering leucine 427–proline 437 has biased composition (polar residues). A compositionally biased stretch (pro residues) spans serine 439–leucine 466.

This sequence belongs to the krueppel C2H2-type zinc-finger protein family.

The protein localises to the nucleus. Functionally, transcription repressor. Involved in the axonal projection and proper termination of olfactory sensory neurons (OSN). Plays a role in rostro-caudal patterning of the diencephalon and in prethalamic formation. Expression is required in OSN to cell-autonomously regulate OSN axon projections. Regulates non-cell-autonomously the layer formation of the olfactory bulb development and the interneurons. May be required for correct rostral migration of the interneuron progenitors. This Mus musculus (Mouse) protein is Fez family zinc finger protein 1 (Fezf1).